The chain runs to 609 residues: MPEILNHILILEKIKNLGISPGCYLWKSRKGEVLYIGKAKNLDKRVRNYLKENHPDIKTRALQKEIFDLDWIATGTEKEALILEATLIKKHNPRFNVRFKDDKKYPYICVSLSESFPMVYITRKLKDNGDRYFGPYSDVKSTRETLDIILRIFPVRKTRQVLPLPKPRRPCLNFDMGRCLGPCQGNIPVEDYKIVIDQVIQFLEGKKESLVGDLSIKMSASSNRMDFEKAARYRDMLQRIQNFREKQTVVSAEGGDEDVIGFARKKDEGQVILLEVRGGRLETKKSFPIQGVLDAEDSEILGAFFRDYYLNAALVPPLIFVPADIQEETAAVMDVLQEKTGFRPKLKSPRGGDKRSLLKIAEKNAELGLTERLLATHYRDQTASLKEIQEMFSLEHPPHIIECYDISHFQGSEPVASGVMFVEGKPFKQGYRKYNIRGYKGINDPGMIHEVISRRLQRIANEESVFPDLIVIDGGPTQLAKACEAAMEAGAERIPMIGLAKKREEIYFPGDNEPFIFDMNSSGMKLLRHLRDEAHRFGVSHHRSRRNKETMRSLIQNVPDIGLKRSKLLLRHFSGEKKIEDATKEELLAVPGIGENLAEKILKRIRKKE.

The 79-residue stretch at 19 to 97 (ISPGCYLWKS…IKKHNPRFNV (79 aa)) folds into the GIY-YIG domain. A UVR domain is found at 208 to 243 (ESLVGDLSIKMSASSNRMDFEKAARYRDMLQRIQNF).

It belongs to the UvrC family. Interacts with UvrB in an incision complex.

The protein resides in the cytoplasm. The UvrABC repair system catalyzes the recognition and processing of DNA lesions. UvrC both incises the 5' and 3' sides of the lesion. The N-terminal half is responsible for the 3' incision and the C-terminal half is responsible for the 5' incision. The protein is UvrABC system protein C of Leptospira borgpetersenii serovar Hardjo-bovis (strain JB197).